A 500-amino-acid chain; its full sequence is L-arabinose isomerase (500 aa).

Residues Glu-306, Glu-333, His-350, and His-450 each coordinate Mn(2+).

It belongs to the arabinose isomerase family. Homohexamer. Requires Mn(2+) as cofactor.

The enzyme catalyses beta-L-arabinopyranose = L-ribulose. It functions in the pathway carbohydrate degradation; L-arabinose degradation via L-ribulose; D-xylulose 5-phosphate from L-arabinose (bacterial route): step 1/3. Functionally, catalyzes the conversion of L-arabinose to L-ribulose. This chain is L-arabinose isomerase, found in Klebsiella pneumoniae (strain 342).